The following is a 1762-amino-acid chain: Kinase D-interacting substrate of 220 kDa (1762 aa).

At 1–508 (MSVLISQSVI…WLIVFLTLLL (508 aa)) the chain is on the cytoplasmic side. ANK repeat units follow at residues 45–74 (AAEQGNVEIVKELLKNGANCNLEDLDNWTA), 78–107 (ASKEGHIHIVEELLKSGASLEHRDMGGWTA), 111–140 (ACYKGRTDVVELLLSHGANPSVTGLYSVYP), 145–174 (AGRGHADIVHLLLQNGAKVNCSDKYGTTPL), 178–207 (ARKGHLECVKHLLAMGADVDQEGANSMTAL), 211–240 (VKGGYTQSVKEILKRNPNVNLTDKDGNTAL), 244–273 (SKEGHIEIVQDLLDAGTYVNIPDRSGDTVL), 277–306 (VRGGHVEIVRALLQKYADIDIRGQDNKTAL), 310–339 (VEKGNATMVRDILQCNPDTEICTKDGETPL), 343–372 (TKMRNIEVVELLLDKGAKVSAVDKKGDTPL), and 376–405 (IRGRSRRLAELLLRNPKDGRLLYRPNKAGE). Residues 440 to 953 (YDLYSSALAD…NIVSVTGRLL (514 aa)) enclose the KAP NTPase domain. A helical transmembrane segment spans residues 509–529 (CGGLGLVFAFTVDTNLAIAIS). The Extracellular segment spans residues 530–533 (LSFL). Residues 534–554 (ALIYIFFIVIYFGGRREGESW) form a helical membrane-spanning segment. Over 555-668 (NWAWALSTRL…SFVIFLFIVG (114 aa)) the chain is Cytoplasmic. A helical membrane pass occupies residues 669–689 (CIIAGITLLAIFRVDPKHLTV). Residues 690-696 (NAILISI) lie on the Extracellular side of the membrane. A helical membrane pass occupies residues 697–717 (ASVVGLAFVLNCRTWWQVLDS). At 718–1680 (LLNSQRKRLH…TPSTVTLNNN (963 aa)) the chain is on the cytoplasmic side. Phosphoserine is present on residues Ser882 and Ser885. Thr914 carries the phosphothreonine modification. A Phosphoserine; by PKD modification is found at Ser918. Residues 1089–1092 (PRPP) are mediates interaction with CRKL. 7 positions are modified to phosphoserine: Ser1163, Ser1288, Ser1344, Ser1351, Ser1353, Ser1354, and Ser1357. Disordered stretches follow at residues 1279 to 1305 (DPRFLNENSSAPVPHGESARRSSHTEL), 1336 to 1358 (RHSNLSWQSQTRRTPSLSSLNSQ), 1390 to 1440 (EGGT…DGRK), and 1452 to 1556 (YSSS…EPIR). A compositionally biased stretch (polar residues) spans 1338–1350 (SNLSWQSQTRRTP). Over residues 1395–1422 (SSTISGRSSPHSTYYIGQSSSGGSIHST) the composition is skewed to low complexity. Positions 1423-1440 (LEQERGKEGELKQEDGRK) are enriched in basic and acidic residues. A compositionally biased stretch (polar residues) spans 1452–1462 (YSSSGVSTNEA). 4 positions are modified to phosphoserine: Ser1513, Ser1518, Ser1547, and Ser1566. Acidic residues predominate over residues 1514-1524 (DEDESGTEESD). Over residues 1529–1553 (LKDDKDKKAEGKAERVCKSPEHSAE) the composition is skewed to basic and acidic residues. A disordered region spans residues 1571–1628 (DKKDSSDSGVRSNESSPNHSLHNEAADDSQLEKANLIELEDEGHSGKRGMPHSLSGLQ). The span at 1579 to 1590 (GVRSNESSPNHS) shows a compositional bias: polar residues. A phosphoserine mark is found at Ser1615 and Ser1625. Thr1671 carries the phosphothreonine modification. A Phosphoserine modification is found at Ser1673. The residue at position 1676 (Thr1676) is a Phosphothreonine. The tract at residues 1704–1762 (ILRPGPSPNPTAVQNENLKSMAHKRSQRSSYTRLSKDASELHAASSESTGFGEERESIL) is disordered. The PDZ-binding signature appears at 1757-1762 (ERESIL).

In terms of assembly, found in a complex, at least composed of KIDINS220, MAGI2, NTRK1 and RAPGEF2; the complex is mainly formed at late endosomes in a nerve growth factor (NGF)-dependent manner. Interacts with RAPGEF2; the interaction is strengthened after NGF stimulation. Isoform 2 interacts (via C-terminal domain) with MAGI2 isoform 1 (via PDZ domain). Interacts with NTRK1, NTRK2, NTRK3, ERKL and NGFR. Can form a ternary complex with NGFR and NTRK1 and this complex is affected by the expression levels of KIDINS220/ARMS. An increase in KIDINS220/ARMS expression leads to a decreased association of NGFR and NTRK1. Interacts (via PDZ-binding motif) with SNTA1 and SNTB2 (via PDZ domains). Interacts with EPHA4 and PRKD1. Tyrosine phosphorylated by NTRK1, NTRK2, EPHB2 and EPHA4. Phosphorylation at Ser-918 is induced by phorbol ester treatment. Phosphorylation by NTRK2 is induced by brain-derived neurotrophic factor (BDNF) and neurotrophin-4/5. Phosphorylation by NTRK1 is induced by nerve growth factor (NGF). As to expression, expressed in developing nervous system and in highly plastic areas of the adult brain. Also expressed in neuroendocrine cells, where it concentrates at the tip of neurites. Expressed in developing muscle and is concentrated at the neuromuscular junction (NMS). SNTA1 can regulate its localization in the NMS.

The protein localises to the membrane. It localises to the late endosome. Promotes a prolonged MAP-kinase signaling by neurotrophins through activation of a Rap1-dependent mechanism. Provides a docking site for the CRKL-C3G complex, resulting in Rap1-dependent sustained ERK activation. May play an important role in regulating postsynaptic signal transduction through the syntrophin-mediated localization of receptor tyrosine kinases such as EPHA4. In cooperation with SNTA1 can enhance EPHA4-induced JAK/STAT activation. Plays a role in nerve growth factor (NGF)-induced recruitment of RAPGEF2 to late endosomes and neurite outgrowth. May play a role in neurotrophin- and ephrin-mediated neuronal outgrowth and in axon guidance during neural development and in neuronal regeneration. The protein is Kinase D-interacting substrate of 220 kDa (Kidins220) of Rattus norvegicus (Rat).